The sequence spans 933 residues: C-1-tetrahydrofolate synthase, cytoplasmic (933 aa).

Residues Met-1 to Leu-303 are methylenetetrahydrofolate dehydrogenase and cyclohydrolase. Substrate-binding positions include Tyr-51–Lys-55 and Val-98–Met-100. Residues Gly-170–Ser-172 and Ser-195 contribute to the NADP(+) site. Pro-270–Gly-274 serves as a coordination point for substrate. The formyltetrahydrofolate synthetase stretch occupies residues Arg-304–Phe-933. Residue Thr-378–Ser-385 coordinates ATP.

The protein in the N-terminal section; belongs to the tetrahydrofolate dehydrogenase/cyclohydrolase family. It in the C-terminal section; belongs to the formate--tetrahydrofolate ligase family. In terms of assembly, homodimer.

The protein localises to the cytoplasm. The enzyme catalyses (6R)-5,10-methylene-5,6,7,8-tetrahydrofolate + NADP(+) = (6R)-5,10-methenyltetrahydrofolate + NADPH. It catalyses the reaction (6R)-5,10-methenyltetrahydrofolate + H2O = (6R)-10-formyltetrahydrofolate + H(+). The catalysed reaction is (6S)-5,6,7,8-tetrahydrofolate + formate + ATP = (6R)-10-formyltetrahydrofolate + ADP + phosphate. Its pathway is one-carbon metabolism; tetrahydrofolate interconversion. This is C-1-tetrahydrofolate synthase, cytoplasmic from Spodoptera frugiperda (Fall armyworm).